The following is a 236-amino-acid chain: MNQSVQPDPKVVVALDFPKTQLAEDFARHLDPQLCRLKVGKELFALGGPQLVEKLITQGFEVFLDLKYHDIPNTVAMACRAAAEMGVWMVNVHSLGGRKMMEAAKEAVLSASHQPLLIGVTILTSMETEDLAEIGLTGTPKENVLRLAKLAHSSGLDGVVSSAQEASDLRKEIGQDFCLVTPGIRPANADVNDQKRIMTPADAMAAGSSYLVVGRPITQAKDPIAVLNEINASIGR.

Residues D16, K38, 65-74 (DLKYHDIPNT), T124, R185, Q194, G214, and R215 contribute to the substrate site. Residue K67 is the Proton donor of the active site.

This sequence belongs to the OMP decarboxylase family. Type 1 subfamily. Homodimer.

It carries out the reaction orotidine 5'-phosphate + H(+) = UMP + CO2. It participates in pyrimidine metabolism; UMP biosynthesis via de novo pathway; UMP from orotate: step 2/2. Its function is as follows. Catalyzes the decarboxylation of orotidine 5'-monophosphate (OMP) to uridine 5'-monophosphate (UMP). In Hydrogenovibrio crunogenus (strain DSM 25203 / XCL-2) (Thiomicrospira crunogena), this protein is Orotidine 5'-phosphate decarboxylase.